A 311-amino-acid polypeptide reads, in one-letter code: tRNA-cytidine(32) 2-sulfurtransferase (311 aa).

The PP-loop motif motif lies at 47-52 (SGGKDS). Cysteine 122, cysteine 125, and cysteine 213 together coordinate [4Fe-4S] cluster.

Belongs to the TtcA family. As to quaternary structure, homodimer. Mg(2+) serves as cofactor. Requires [4Fe-4S] cluster as cofactor.

The protein localises to the cytoplasm. The catalysed reaction is cytidine(32) in tRNA + S-sulfanyl-L-cysteinyl-[cysteine desulfurase] + AH2 + ATP = 2-thiocytidine(32) in tRNA + L-cysteinyl-[cysteine desulfurase] + A + AMP + diphosphate + H(+). It functions in the pathway tRNA modification. In terms of biological role, catalyzes the ATP-dependent 2-thiolation of cytidine in position 32 of tRNA, to form 2-thiocytidine (s(2)C32). The sulfur atoms are provided by the cysteine/cysteine desulfurase (IscS) system. The sequence is that of tRNA-cytidine(32) 2-sulfurtransferase from Salmonella heidelberg (strain SL476).